Here is a 354-residue protein sequence, read N- to C-terminus: Zinc finger protein-like 1 homolog (354 aa).

The B box-type; degenerate zinc finger occupies methionine 1–tryptophan 41. Residues cysteine 52 to proline 103 form an RING-type; atypical zinc finger. Disordered stretches follow at residues lysine 139–histidine 167 and glycine 187–leucine 225. The segment covering asparagine 196 to asparagine 205 has biased composition (low complexity). Residues tyrosine 287 to serine 307 form a helical membrane-spanning segment. The tract at residues isoleucine 326–glutamine 354 is disordered.

Belongs to the ZFPL1 family.

Its subcellular location is the membrane. This chain is Zinc finger protein-like 1 homolog (zfpl1), found in Dictyostelium discoideum (Social amoeba).